A 352-amino-acid chain; its full sequence is MEAMGEWSNNLGGMYTYATEEADFMNQLLASYDHPGTGSSSGAAASGDHQGLYWNLGSHHNHLSLVSEAGSFCFSQESSSYSAGNSGYYTVVPPTVEENQNETMDFGMEDVTINTNSYLVGEETSECDVEKYSSGKTLMPLETVVENHDDEESLLQSEISVTTTKSLTGSKKRSRATSTDKNKRARVNKRAQKNVEMSGDNNEGEEEEGETKLKKRKNGAMMSRQNSSTTFCTEEESNCADQDGGGEDSSSKEDDPSKALNLNGKTRASRGAATDPQSLYARKRRERINERLRILQNLVPNGTKVDISTMLEEAVHYVKFLQLQIKLLSSDDLWMYAPIAFNGMDIGLSSPR.

Positions 160 to 169 (SVTTTKSLTG) are enriched in polar residues. The tract at residues 160–277 (SVTTTKSLTG…ASRGAATDPQ (118 aa)) is disordered. Residues 183–192 (KRARVNKRAQ) show a composition bias toward basic residues. Positions 223–232 (SRQNSSTTFC) are enriched in polar residues. The basic motif stretch occupies residues 272–285 (AATDPQSLYARKRR). Residues 272-321 (AATDPQSLYARKRRERINERLRILQNLVPNGTKVDISTMLEEAVHYVKFL) form the bHLH domain. Residues 286 to 321 (ERINERLRILQNLVPNGTKVDISTMLEEAVHYVKFL) are helix-loop-helix motif.

In terms of assembly, homodimer. As to expression, expressed in roots. Expressed in root epidermal hair cells.

Its subcellular location is the nucleus. In terms of biological role, transcription factor involved in the regulation of root hair elongation. Does not seem to be a direct transcriptional target of RHD6 and RSL1. Involved in the regulation of root hair elongation in response to low phosphate. The protein is Transcription factor RSL2 of Arabidopsis thaliana (Mouse-ear cress).